Here is a 129-residue protein sequence, read N- to C-terminus: Small ribosomal subunit protein uS11 (129 aa).

This sequence belongs to the universal ribosomal protein uS11 family. As to quaternary structure, part of the 30S ribosomal subunit. Interacts with proteins S7 and S18. Binds to IF-3.

Its function is as follows. Located on the platform of the 30S subunit, it bridges several disparate RNA helices of the 16S rRNA. Forms part of the Shine-Dalgarno cleft in the 70S ribosome. This is Small ribosomal subunit protein uS11 from Brucella abortus (strain S19).